The following is a 435-amino-acid chain: ATP-dependent protease ATPase subunit HslU (435 aa).

ATP contacts are provided by residues valine 18, 60–65 (GVGKTE), aspartate 248, glutamate 313, and arginine 385.

It belongs to the ClpX chaperone family. HslU subfamily. As to quaternary structure, a double ring-shaped homohexamer of HslV is capped on each side by a ring-shaped HslU homohexamer. The assembly of the HslU/HslV complex is dependent on binding of ATP.

Its subcellular location is the cytoplasm. ATPase subunit of a proteasome-like degradation complex; this subunit has chaperone activity. The binding of ATP and its subsequent hydrolysis by HslU are essential for unfolding of protein substrates subsequently hydrolyzed by HslV. HslU recognizes the N-terminal part of its protein substrates and unfolds these before they are guided to HslV for hydrolysis. This chain is ATP-dependent protease ATPase subunit HslU, found in Rhodospirillum rubrum (strain ATCC 11170 / ATH 1.1.1 / DSM 467 / LMG 4362 / NCIMB 8255 / S1).